Here is a 131-residue protein sequence, read N- to C-terminus: Phosphoribosyl-AMP cyclohydrolase (131 aa).

Asp74 lines the Mg(2+) pocket. Cys75 is a Zn(2+) binding site. The Mg(2+) site is built by Asp76 and Asp78. The Zn(2+) site is built by Cys91 and Cys98.

Belongs to the PRA-CH family. As to quaternary structure, homodimer. It depends on Mg(2+) as a cofactor. The cofactor is Zn(2+).

Its subcellular location is the cytoplasm. It carries out the reaction 1-(5-phospho-beta-D-ribosyl)-5'-AMP + H2O = 1-(5-phospho-beta-D-ribosyl)-5-[(5-phospho-beta-D-ribosylamino)methylideneamino]imidazole-4-carboxamide. Its pathway is amino-acid biosynthesis; L-histidine biosynthesis; L-histidine from 5-phospho-alpha-D-ribose 1-diphosphate: step 3/9. Functionally, catalyzes the hydrolysis of the adenine ring of phosphoribosyl-AMP. The protein is Phosphoribosyl-AMP cyclohydrolase of Bradyrhizobium sp. (strain BTAi1 / ATCC BAA-1182).